The chain runs to 493 residues: Alpha-amylase-related protein (493 aa).

A signal peptide spans 1 to 19 (MFKFATAVILCLAASSTLA). Position 20 is a pyrrolidone carboxylic acid (Gln20). Cys47 and Cys103 are joined by a disulfide. 3 residues coordinate Ca(2+): Asn117, Gln168, and Asp177. Cys156 and Cys170 form a disulfide bridge. Residue Arg205 coordinates chloride. The active-site Nucleophile is the Asp207. His211 contributes to the Ca(2+) binding site. Glu244 acts as the Proton donor in catalysis. Residues Asn307 and Arg342 each coordinate chloride. 3 disulfides stabilise this stretch: Cys375-Cys381, Cys417-Cys440, and Cys447-Cys459.

The protein belongs to the glycosyl hydrolase 13 family. As to quaternary structure, monomer. It depends on Ca(2+) as a cofactor. Requires chloride as cofactor.

The protein localises to the secreted. It catalyses the reaction Endohydrolysis of (1-&gt;4)-alpha-D-glucosidic linkages in polysaccharides containing three or more (1-&gt;4)-alpha-linked D-glucose units.. The polypeptide is Alpha-amylase-related protein (Amyrel) (Drosophila ananassae (Fruit fly)).